The following is a 209-amino-acid chain: Large ribosomal subunit protein bL9 (209 aa).

The segment at glutamate 181–alanine 209 is disordered. Residues glutamate 197–alanine 209 are compositionally biased toward acidic residues.

This sequence belongs to the bacterial ribosomal protein bL9 family.

In terms of biological role, binds to the 23S rRNA. The protein is Large ribosomal subunit protein bL9 of Maricaulis maris (strain MCS10) (Caulobacter maris).